We begin with the raw amino-acid sequence, 163 residues long: Cyanate hydratase (163 aa).

Active-site residues include Arg103, Glu106, and Ser129.

It belongs to the cyanase family.

It carries out the reaction cyanate + hydrogencarbonate + 3 H(+) = NH4(+) + 2 CO2. Its function is as follows. Catalyzes the reaction of cyanate with bicarbonate to produce ammonia and carbon dioxide. This chain is Cyanate hydratase, found in Paracoccidioides lutzii (strain ATCC MYA-826 / Pb01) (Paracoccidioides brasiliensis).